The primary structure comprises 210 residues: Ribosomal RNA large subunit methyltransferase E (210 aa).

5 residues coordinate S-adenosyl-L-methionine: Gly-61, Trp-63, Asp-81, Asp-97, and Asp-122. The active-site Proton acceptor is the Lys-162.

It belongs to the class I-like SAM-binding methyltransferase superfamily. RNA methyltransferase RlmE family.

It is found in the cytoplasm. It carries out the reaction uridine(2552) in 23S rRNA + S-adenosyl-L-methionine = 2'-O-methyluridine(2552) in 23S rRNA + S-adenosyl-L-homocysteine + H(+). In terms of biological role, specifically methylates the uridine in position 2552 of 23S rRNA at the 2'-O position of the ribose in the fully assembled 50S ribosomal subunit. This is Ribosomal RNA large subunit methyltransferase E from Xanthomonas campestris pv. campestris (strain 8004).